The following is a 95-amino-acid chain: Large ribosomal subunit protein uL23 (95 aa).

The protein belongs to the universal ribosomal protein uL23 family. As to quaternary structure, part of the 50S ribosomal subunit. Contacts protein L29, and trigger factor when it is bound to the ribosome.

In terms of biological role, one of the early assembly proteins it binds 23S rRNA. One of the proteins that surrounds the polypeptide exit tunnel on the outside of the ribosome. Forms the main docking site for trigger factor binding to the ribosome. In Lawsonia intracellularis (strain PHE/MN1-00), this protein is Large ribosomal subunit protein uL23.